A 339-amino-acid chain; its full sequence is Replication factor C subunit 2 (339 aa).

48 to 55 (YGPPGTGK) lines the ATP pocket.

It belongs to the activator 1 small subunits family. As to quaternary structure, heterotetramer of subunits RFC2, RFC3, RFC4 and RFC5 that can form a complex with RFC1. As to expression, expressed in roots, leaves, shoot apical meristem (SAM), flag leaves and panicles.

The protein resides in the nucleus. May be involved in DNA replication and thus regulate cell proliferation. This chain is Replication factor C subunit 2 (RFC2), found in Oryza sativa subsp. japonica (Rice).